The chain runs to 262 residues: Acyl-[acyl-carrier-protein]--UDP-N-acetylglucosamine O-acyltransferase (262 aa).

It belongs to the transferase hexapeptide repeat family. LpxA subfamily. In terms of assembly, homotrimer.

It is found in the cytoplasm. The catalysed reaction is a (3R)-hydroxyacyl-[ACP] + UDP-N-acetyl-alpha-D-glucosamine = a UDP-3-O-[(3R)-3-hydroxyacyl]-N-acetyl-alpha-D-glucosamine + holo-[ACP]. Its pathway is glycolipid biosynthesis; lipid IV(A) biosynthesis; lipid IV(A) from (3R)-3-hydroxytetradecanoyl-[acyl-carrier-protein] and UDP-N-acetyl-alpha-D-glucosamine: step 1/6. Its function is as follows. Involved in the biosynthesis of lipid A, a phosphorylated glycolipid that anchors the lipopolysaccharide to the outer membrane of the cell. The protein is Acyl-[acyl-carrier-protein]--UDP-N-acetylglucosamine O-acyltransferase of Burkholderia thailandensis (strain ATCC 700388 / DSM 13276 / CCUG 48851 / CIP 106301 / E264).